A 282-amino-acid chain; its full sequence is Serine/threonine-protein kinase Aurora-2 (282 aa).

Residues 19–270 (FDIGKPLGRG…LHKLLEHPWI (252 aa)) enclose the Protein kinase domain. ATP-binding positions include 25 to 33 (LGRGKFGHV) and lysine 48. Aspartate 142 (proton acceptor) is an active-site residue. Position 164 is a phosphoserine (serine 164). The residue at position 173 (threonine 173) is a Phosphothreonine.

This sequence belongs to the protein kinase superfamily. Ser/Thr protein kinase family. Aurora subfamily. In terms of processing, phosphorylation at Thr-173 may regulate activity and degradation of AUR2 in a cell cycle dependent manner. Abundant in roots, flowers and flower buds, low or absent in expanded leaves, stems and siliques.

It localises to the nucleus membrane. The protein localises to the cytoplasm. Its subcellular location is the cytoskeleton. The protein resides in the spindle. It is found in the spindle pole. The catalysed reaction is L-seryl-[protein] + ATP = O-phospho-L-seryl-[protein] + ADP + H(+). It carries out the reaction L-threonyl-[protein] + ATP = O-phospho-L-threonyl-[protein] + ADP + H(+). Its function is as follows. Phosphorylates specifically 'Ser-10' of histone H3 in vitro. Associates with cytoskeletal structures that are necessary for cytokinesis and with the microtubule spindle. Might colocalize with gamma-tubulin and function in microtubule organizing centers (MTOCs). In Arabidopsis thaliana (Mouse-ear cress), this protein is Serine/threonine-protein kinase Aurora-2 (AUR2).